The chain runs to 306 residues: Phospho-N-acetylmuramoyl-pentapeptide-transferase (306 aa).

10 helical membrane passes run 2-22 (IALL…LKYW), 47-67 (SGTP…FLFF), 71-91 (FFIS…DLKL), 105-125 (IFLS…DYKI), 131-151 (LIID…IAVP), 162-182 (GLAG…SFHF), 185-205 (IALE…FNSH), 209-229 (IFMG…LSVV), 236-256 (LIFL…QVFF), and 284-304 (IVWR…VLWY).

Belongs to the glycosyltransferase 4 family. MraY subfamily. Requires Mg(2+) as cofactor.

The protein resides in the cell inner membrane. It carries out the reaction UDP-N-acetyl-alpha-D-muramoyl-L-alanyl-gamma-D-glutamyl-meso-2,6-diaminopimeloyl-D-alanyl-D-alanine + di-trans,octa-cis-undecaprenyl phosphate = di-trans,octa-cis-undecaprenyl diphospho-N-acetyl-alpha-D-muramoyl-L-alanyl-D-glutamyl-meso-2,6-diaminopimeloyl-D-alanyl-D-alanine + UMP. It functions in the pathway cell wall biogenesis; peptidoglycan biosynthesis. Functionally, catalyzes the initial step of the lipid cycle reactions in the biosynthesis of the cell wall peptidoglycan: transfers peptidoglycan precursor phospho-MurNAc-pentapeptide from UDP-MurNAc-pentapeptide onto the lipid carrier undecaprenyl phosphate, yielding undecaprenyl-pyrophosphoryl-MurNAc-pentapeptide, known as lipid I. This is Phospho-N-acetylmuramoyl-pentapeptide-transferase from Dictyoglomus thermophilum (strain ATCC 35947 / DSM 3960 / H-6-12).